The sequence spans 121 residues: Pancreatic progenitor cell differentiation and proliferation factor (121 aa).

Disordered stretches follow at residues 22–47 (GSTSSNSSCGSSEYAGEVIPHPPGLQ) and 101–121 (SRQLSESSDSGKVEQGSPPPS). A compositionally biased stretch (low complexity) spans 23–33 (STSSNSSCGSS). Residues 101 to 110 (SRQLSESSDS) show a composition bias toward polar residues.

Belongs to the PPDPF family.

Its function is as follows. Probable regulator of exocrine pancreas development. The polypeptide is Pancreatic progenitor cell differentiation and proliferation factor (ppdpf) (Salmo salar (Atlantic salmon)).